A 154-amino-acid polypeptide reads, in one-letter code: uncharacterized protein (154 aa).

This is an uncharacterized protein from Methanocaldococcus jannaschii (strain ATCC 43067 / DSM 2661 / JAL-1 / JCM 10045 / NBRC 100440) (Methanococcus jannaschii).